A 188-amino-acid chain; its full sequence is Elongation factor P (188 aa).

The protein belongs to the elongation factor P family.

The protein resides in the cytoplasm. Its pathway is protein biosynthesis; polypeptide chain elongation. Its function is as follows. Involved in peptide bond synthesis. Stimulates efficient translation and peptide-bond synthesis on native or reconstituted 70S ribosomes in vitro. Probably functions indirectly by altering the affinity of the ribosome for aminoacyl-tRNA, thus increasing their reactivity as acceptors for peptidyl transferase. The protein is Elongation factor P of Chlorobaculum tepidum (strain ATCC 49652 / DSM 12025 / NBRC 103806 / TLS) (Chlorobium tepidum).